The following is a 177-amino-acid chain: Large ribosomal subunit protein uL6 (177 aa).

The protein belongs to the universal ribosomal protein uL6 family. In terms of assembly, part of the 50S ribosomal subunit.

In terms of biological role, this protein binds to the 23S rRNA, and is important in its secondary structure. It is located near the subunit interface in the base of the L7/L12 stalk, and near the tRNA binding site of the peptidyltransferase center. This chain is Large ribosomal subunit protein uL6, found in Cupriavidus pinatubonensis (strain JMP 134 / LMG 1197) (Cupriavidus necator (strain JMP 134)).